Consider the following 3114-residue polypeptide: Centromere protein F (3114 aa).

Positions 1–481 are interaction with SNAP25 and required for localization to the cytoplasm; that stretch reads MSWALEEWKE…IKENELRRSM (481 aa). A coiled-coil region spans residues 13–131; sequence PTRALQKIQE…KSELERSQQA (119 aa). At Ser106 the chain carries Phosphoserine. Phosphothreonine is present on residues Thr144, Thr151, and Thr154. At Tyr158 the chain carries Phosphotyrosine. Residues 211-235 show a composition bias toward polar residues; that stretch reads QASSSVFSWQQEKTPSHLSSNSQRT. The tract at residues 211–236 is disordered; it reads QASSSVFSWQQEKTPSHLSSNSQRTP. Ser242 and Ser276 each carry phosphoserine. Residues 280-685 adopt a coiled-coil conformation; it reads LDQLKAQNQE…SVEIRNLHNV (406 aa). Ser773, Ser783, Ser821, Ser834, Ser838, and Ser876 each carry phosphoserine. Coiled-coil stretches lie at residues 899–989 and 1196–1244; these read VAET…LNQE and LEVK…IRGD. 3 positions are modified to phosphoserine: Ser1248, Ser1255, and Ser1259. Residues 1549 to 1646 are a coiled coil; sequence VEELESLCEV…ELEVARLQLQ (98 aa). Phosphoserine is present on residues Ser1651, Ser1652, and Ser1654. Disordered regions lie at residues 1667–1690 and 1710–1746; these read RNESCDISKEHTSETTERTPKHDV and TETGAVKPTGECSGEQSPDTNYEPPGEDKTQGSSECI. Positions 1669–1690 are enriched in basic and acidic residues; the sequence is ESCDISKEHTSETTERTPKHDV. Ser1726 carries the post-translational modification Phosphoserine. Position 1862 is a phosphothreonine (Thr1862). 2 positions are modified to phosphoserine: Ser1868 and Ser1892. Coiled-coil stretches lie at residues 1890–2078 and 2107–2891; these read NDSW…LQAR and LSST…LCSQ. The tract at residues 2026–2351 is interaction with NDE1 and NDEL1; sequence LLKDKTHLQE…ERELEIARTN (326 aa). 2 repeat units span residues 2111 to 2290 and 2293 to 2472. Positions 2111 to 2472 are 2 X 177 AA tandem repeats; the sequence is QEEVHQLRRG…ACKAKEQNLS (362 aa). The sufficient for self-association stretch occupies residues 2392 to 2829; it reads SEKENLTNEL…QAAQEKQKTG (438 aa). The sufficient for centromere localization stretch occupies residues 2392-3017; the sequence is SEKENLTNEL…ATRTSPRLAA (626 aa). Ser2416 and Ser2417 each carry phosphoserine. Lys2779 carries the post-translational modification N6-acetyllysine. The sufficient for nuclear localization stretch occupies residues 2831–3017; it reads VMDTKVDELT…ATRTSPRLAA (187 aa). A disordered region spans residues 2891–2977; that stretch reads QQSKQDSRGS…AEDTEGTEFE (87 aa). Phosphoserine is present on residues Ser2900, Ser2911, Ser2922, and Ser2936. The Nuclear localization signal signature appears at 2919–2936; that stretch reads KRLSSGQNKASGKRQRSS. A Phosphothreonine modification is found at Thr2949. 4 positions are modified to phosphoserine: Ser2952, Ser2998, Ser3023, and Ser3026. Residues 3024–3114 are disordered; sequence PLSLGKENLA…SNGSENCKVQ (91 aa). The span at 3033–3045 shows a compositional bias: polar residues; the sequence is AESSKPTAGGSRS. A phosphoserine mark is found at Ser3054, Ser3079, and Ser3083. Basic and acidic residues predominate over residues 3079 to 3089; the sequence is SPTDSPREGLR. The span at 3105–3114 shows a compositional bias: polar residues; it reads SNGSENCKVQ. Cysteine methyl ester is present on Cys3111. Residue Cys3111 is the site of S-farnesyl cysteine attachment. A propeptide spans 3112–3114 (removed in mature form); it reads KVQ.

Belongs to the centromere protein F family. In terms of assembly, interacts with and STX4 (via C-terminus). Interacts (via N-terminus) with RBL1, RBL2 and SNAP25. Self-associates. Interacts with CENP-E and BUBR1 (via C-terminus). Interacts (via C-terminus) with NDE1, NDEL1 and RB1. Post-translationally, hyperphosphorylated during mitosis.

The protein resides in the cytoplasm. It localises to the perinuclear region. Its subcellular location is the nucleus matrix. The protein localises to the chromosome. It is found in the centromere. The protein resides in the kinetochore. It localises to the cytoskeleton. Its subcellular location is the spindle. Its function is as follows. Required for kinetochore function and chromosome segregation in mitosis. Required for kinetochore localization of dynein, LIS1, NDE1 and NDEL1. Regulates recycling of the plasma membrane by acting as a link between recycling vesicles and the microtubule network though its association with STX4 and SNAP25. Acts as a potential inhibitor of pocket protein-mediated cellular processes during development by regulating the activity of RB proteins during cell division and proliferation. May play a regulatory or permissive role in the normal embryonic cardiomyocyte cell cycle and in promoting continued mitosis in transformed, abnormally dividing neonatal cardiomyocytes. Interaction with RB directs embryonic stem cells toward a cardiac lineage. Involved in the regulation of DNA synthesis and hence cell cycle progression, via its C-terminus. Has a potential role regulating skeletal myogenesis and in cell differentiation in embryogenesis. Involved in dendritic cell regulation of T-cell immunity against chlamydia. This is Centromere protein F (CENPF) from Homo sapiens (Human).